A 244-amino-acid chain; its full sequence is Extracellular superoxide dismutase [Cu-Zn] (244 aa).

The N-terminal stretch at 1–18 (MLALVCSCLLLAALPADT) is a signal peptide. 2 disulfide bridges follow: Cys67-Cys212 and Cys129-Cys211. Asn111 carries an N-linked (GlcNAc...) asparagine glycan. Cu cation contacts are provided by His118, His120, and His135. His135, His143, His146, and Asp149 together coordinate Zn(2+). His185 contributes to the Cu cation binding site. The segment at 221–244 (PWARQAQEHAERKKRRRESECKAA) is disordered. The segment covering 226–244 (AQEHAERKKRRRESECKAA) has biased composition (basic and acidic residues).

This sequence belongs to the Cu-Zn superoxide dismutase family. In terms of assembly, homotetramer. Directly interacts with ATP7A; this interaction is copper-dependent and is required for SOD3 activity. Requires Cu cation as cofactor. Zn(2+) is required as a cofactor.

The protein resides in the secreted. Its subcellular location is the extracellular space. It localises to the golgi apparatus. The protein localises to the trans-Golgi network. It carries out the reaction 2 superoxide + 2 H(+) = H2O2 + O2. Functionally, protect the extracellular space from toxic effect of reactive oxygen intermediates by converting superoxide radicals into hydrogen peroxide and oxygen. The protein is Extracellular superoxide dismutase [Cu-Zn] (SOD3) of Oryctolagus cuniculus (Rabbit).